A 459-amino-acid polypeptide reads, in one-letter code: MQNNTTKSVKNNNVIELIDIVKQFDEKLVLDNVNLNIKRGEFVTLLGPSGSGKTTILRLIGGFEWATRGEIKFNGVDIKDLSPHKRNLSTIFQDYALFPHLNVEGNIMYGLKLKRVPKENVKKEHKNLLERKIKVWTEKAQREMKNLDKLQEEYENELKVLKPGTYKHQKRQTWLDDSDFKYSYWESYVLQKTEEFKNKYFKRKLTKEEIDQTVDKIVNLVGLQNNKNKKITELSGGMKQRVALARSLIIEPEILLLDEPLSALDAKIREKMQVFLKQIQQELKLTFIFVTHDQDEALELSDRIAVIREGKIEQYDTPKQIYDYPRNIWVAKFIGNSNIFNAKFLKDSKVELLNKEFKTIHDEDEFAVDEEVDALIRPEDIDIVNQTQNTEHKIKGKIVESIYRGSYYYIKVELKDSNYIFVETAKNFAVDETVYLSWTIDSIHLMKKDPKWDYAKKDF.

The ABC transporter domain occupies 15–334; it reads IELIDIVKQF…PRNIWVAKFI (320 aa). 47 to 54 is an ATP binding site; that stretch reads GPSGSGKT. Positions 115–203 are insert; the sequence is RVPKENVKKE…EEFKNKYFKR (89 aa).

It belongs to the ABC transporter superfamily. Spermidine/putrescine importer (TC 3.A.1.11.1) family. As to quaternary structure, the complex is composed of two ATP-binding proteins (PotA), two transmembrane proteins (PotB and PotC) and a solute-binding protein (PotD).

The protein localises to the cell membrane. It carries out the reaction ATP + H2O + polyamine-[polyamine-binding protein]Side 1 = ADP + phosphate + polyamineSide 2 + [polyamine-binding protein]Side 1.. Its function is as follows. Part of the ABC transporter complex PotABCD involved in spermidine/putrescine import. Responsible for energy coupling to the transport system. The sequence is that of Spermidine/putrescine import ATP-binding protein PotA from Mycoplasmopsis synoviae (strain 53) (Mycoplasma synoviae).